A 313-amino-acid chain; its full sequence is tRNA dimethylallyltransferase (313 aa).

9–16 (GPTATGKS) is an ATP binding site. Position 11–16 (11–16 (TATGKS)) interacts with substrate.

It belongs to the IPP transferase family. As to quaternary structure, monomer. Mg(2+) serves as cofactor.

It catalyses the reaction adenosine(37) in tRNA + dimethylallyl diphosphate = N(6)-dimethylallyladenosine(37) in tRNA + diphosphate. Its function is as follows. Catalyzes the transfer of a dimethylallyl group onto the adenine at position 37 in tRNAs that read codons beginning with uridine, leading to the formation of N6-(dimethylallyl)adenosine (i(6)A). This chain is tRNA dimethylallyltransferase, found in Mycobacteroides abscessus (strain ATCC 19977 / DSM 44196 / CCUG 20993 / CIP 104536 / JCM 13569 / NCTC 13031 / TMC 1543 / L948) (Mycobacterium abscessus).